Consider the following 197-residue polypeptide: Putative peptidyl-prolyl cis-trans isomerase (197 aa).

In terms of domain architecture, PPIase cyclophilin-type spans 14–195; that stretch reads NEIKLIMHTN…HDITIDSIEI (182 aa).

It belongs to the cyclophilin-type PPIase family.

It carries out the reaction [protein]-peptidylproline (omega=180) = [protein]-peptidylproline (omega=0). PPIases accelerate the folding of proteins. It catalyzes the cis-trans isomerization of proline imidic peptide bonds in oligopeptides. The protein is Putative peptidyl-prolyl cis-trans isomerase of Staphylococcus saprophyticus subsp. saprophyticus (strain ATCC 15305 / DSM 20229 / NCIMB 8711 / NCTC 7292 / S-41).